We begin with the raw amino-acid sequence, 321 residues long: Glutathione synthetase (321 aa).

Residues 125 to 311 (EKLFTGWFPH…IAGQFIAFLE (187 aa)) enclose the ATP-grasp domain. Position 151-208 (151-208 (FIREQKEVVIKPLGAMAGESIFYLTVNDPNIPVVIETMTANGHQLVMAQRFIPEVKSG)) interacts with ATP. Residues Glu282 and Asn284 each coordinate Mg(2+).

It belongs to the prokaryotic GSH synthase family. Mg(2+) serves as cofactor. The cofactor is Mn(2+).

The enzyme catalyses gamma-L-glutamyl-L-cysteine + glycine + ATP = glutathione + ADP + phosphate + H(+). It participates in sulfur metabolism; glutathione biosynthesis; glutathione from L-cysteine and L-glutamate: step 2/2. The chain is Glutathione synthetase from Coxiella burnetii (strain RSA 493 / Nine Mile phase I).